The following is a 780-amino-acid chain: WD repeat-containing protein 27 (780 aa).

WD repeat units follow at residues 3–56 (TPPE…VWSS), 61–100 (HQLL…MWNV), 111–150 (LTPR…VMDV), 154–193 (SVLV…VWDF), 200–236 (YSSS…IFSL), 291–335 (FPIL…LASF), 342–385 (HFKE…VLEI), 500–540 (NLSR…VFNA), 544–582 (GPPA…VWSV), 588–639 (MLLL…RYKP), 644–685 (KPIF…VFDL), 691–738 (AAVL…LWDL), and 752–779 (AFCT…LSQP).

This Mus musculus (Mouse) protein is WD repeat-containing protein 27 (Wdr27).